Consider the following 481-residue polypeptide: MADKITSRSEDYSQWYIDLVRSAKLADYADVRGCMDIRPNGYAIWEKMQAALDRMFKETGHVNAYFPLFIPESFIAKEAEHIEGFAPECAVVTHGGGEELAEKLYIRPTSETIIWSSYKKWIQSYRDLPILINQWANVVRWEMRTRLFLRTTEFLWQEGHTAHANPEESQEEVLRMINVYKTFAEEYMAMPVIMGKKTDNEKFAGAVDTWCIEAMMQDSKALQAGTSHNLGQNFAKAFDCQFQTKDGVLDYVWATSWGVSTRLIGALIMAHSDDRGLVLPPKLATRQVVIIPILRGDKAAVIERANALAQELNKNGIPSFVDSSEQNSPGWKFAEYELQGIPIRIELGPRDIEKGICIAARRDTLEKTELALDETLPDQISEILNTIQESMFERALQFRTEHTFEVQSYEEFKVAVEKGFVIAHWDGTAETEAKIKAETKATIRVLPEEADYIAQYRIDEPGTCIYSGKPAARKVVFAKAY.

It belongs to the class-II aminoacyl-tRNA synthetase family. ProS type 3 subfamily. Homodimer.

The protein resides in the cytoplasm. It catalyses the reaction tRNA(Pro) + L-proline + ATP = L-prolyl-tRNA(Pro) + AMP + diphosphate. Functionally, catalyzes the attachment of proline to tRNA(Pro) in a two-step reaction: proline is first activated by ATP to form Pro-AMP and then transferred to the acceptor end of tRNA(Pro). The polypeptide is Proline--tRNA ligase (Pelodictyon phaeoclathratiforme (strain DSM 5477 / BU-1)).